Reading from the N-terminus, the 523-residue chain is DNA primase (523 aa).

The segment at 37-61 (CPFHAEKTPSFFVNPLQGYFYCFGC) adopts a CHC2-type zinc-finger fold. The Toprim domain occupies 259–340 (KSVILVEGYI…NVSVVRMDFG (82 aa)). Mg(2+)-binding residues include E265, D309, and D311.

The protein belongs to the DnaG primase family. As to quaternary structure, monomer. Interacts with DnaB. Zn(2+) serves as cofactor. Requires Mg(2+) as cofactor.

The enzyme catalyses ssDNA + n NTP = ssDNA/pppN(pN)n-1 hybrid + (n-1) diphosphate.. Functionally, RNA polymerase that catalyzes the synthesis of short RNA molecules used as primers for DNA polymerase during DNA replication. The protein is DNA primase of Borreliella burgdorferi (strain ATCC 35210 / DSM 4680 / CIP 102532 / B31) (Borrelia burgdorferi).